The chain runs to 1052 residues: uncharacterized protein (1052 aa).

Positions 389 to 561 (WINKGKTFAI…NKGGNYIMIN (173 aa)) constitute a Helicase ATP-binding domain. Residue 400-407 (SAMGTGKT) coordinates ATP.

This sequence belongs to the mimivirus R1 family.

This is an uncharacterized protein from Acanthamoeba polyphaga mimivirus (APMV).